Reading from the N-terminus, the 274-residue chain is Thiamine kinase (274 aa).

The protein belongs to the thiamine kinase family.

The enzyme catalyses thiamine + ATP = thiamine phosphate + ADP + H(+). Its pathway is cofactor biosynthesis; thiamine diphosphate biosynthesis; thiamine phosphate from thiamine: step 1/1. In terms of biological role, catalyzes the ATP-dependent phosphorylation of thiamine to thiamine phosphate. Is involved in thiamine salvage. This is Thiamine kinase from Salmonella typhi.